A 273-amino-acid polypeptide reads, in one-letter code: MRLIILDTAEYVGEWSAKYVMKRINDFKPGPDRYFTLGLPTGSTPLGMYRHLIKFHQQGRISFKYVKTFNMDEYVDLPRDHPESYHYFMWHNFFKHIDIDPENVHILDGNAPDLVAECDAFEEKIRAAGGIELFIGGIGPDGHIAFNEPGSSLASRTRVKTLAQDTLEANARFFGNDISKVPKQALTVGVATVMDAREVMIMILGSHKAFALYKAIEEGVNHMWTVSAFQQHPHTIMICDEDATLELRVKTVKYFKDCYKLSADGLEQATLRN.

Aspartate 72 functions as the Proton acceptor; for enolization step in the catalytic mechanism. The active-site For ring-opening step is the aspartate 141. The active-site Proton acceptor; for ring-opening step is histidine 143. The active-site For ring-opening step is the glutamate 148.

The protein belongs to the glucosamine/galactosamine-6-phosphate isomerase family. In terms of assembly, homohexamer.

The protein resides in the cytoplasm. The enzyme catalyses alpha-D-glucosamine 6-phosphate + H2O = beta-D-fructose 6-phosphate + NH4(+). It participates in nucleotide-sugar biosynthesis; UDP-N-acetyl-alpha-D-glucosamine biosynthesis; alpha-D-glucosamine 6-phosphate from D-fructose 6-phosphate: step 1/1. In terms of biological role, catalyzes the reversible conversion of alpha-D-glucosamine 6-phosphate (GlcN-6P) into beta-D-fructose 6-phosphate (Fru-6P) and ammonium ion, a regulatory reaction step in de novo uridine diphosphate-N-acetyl-alpha-D-glucosamine (UDP-GlcNAc) biosynthesis via hexosamine pathway. The chain is Glucosamine-6-phosphate deaminase (Gnpda1) from Anopheles gambiae (African malaria mosquito).